A 1202-amino-acid chain; its full sequence is Calmodulin-binding transcription activator 2 (1202 aa).

Residues 30-155 (RCPLLPPERL…YLNVPALEDC (126 aa)) constitute a DNA-binding region (CG-1). A Nuclear localization signal motif is present at residues 79–86 (RKKVKYRK). Disordered regions lie at residues 263-322 (SIPH…SRGG), 361-409 (GTEP…AHTP), and 421-491 (PQAA…LFGG). The segment covering 270–283 (PEPPPLIAPLPPEL) has biased composition (pro residues). 2 stretches are compositionally biased toward low complexity: residues 289 to 299 (SPSSSSSSSSS) and 313 to 322 (TSRGGSSRGG). 2 stretches are compositionally biased toward pro residues: residues 365–374 (SAPPAPPSPA) and 460–476 (PPIPSPPPSPPPSPAPL). The region spanning 537-615 (DFSPEWSYPE…LSASVLFEYR (79 aa)) is the IPT/TIG domain. 3 ANK repeats span residues 712 to 745 (MSLLHLAAAQGYARLIETLSQWRSVETGSLDLEQ), 757 to 787 (CTPLMWACALGHLEAAVLLFRWNRQALSIPD), and 791 to 821 (RLPLSVAHSRGHVRLARCLEELQRQEPSVEP). Disordered regions lie at residues 817–874 (PSVE…ASEM) and 906–929 (PLSSLPALPPASDDGAAPEDADSP). Low complexity-rich tracts occupy residues 826–846 (SPPSSSPDTGLSSVSSPSELS) and 906–917 (PLSSLPALPPAS). 2 consecutive IQ domains span residues 1049–1078 (YEAARVIQTAFRKYKGRRLKEQQEVAAAVI) and 1102–1131 (TQAAILIQSKFRSYYEQKRFQQSRRAAVLI).

This sequence belongs to the CAMTA family. May interact with calmodulin. Detected in brain. Expressed at constant levels throughout the cell cycle in neuroblastoma cell lines.

The protein resides in the nucleus. In terms of biological role, transcription activator. May act as tumor suppressor. The sequence is that of Calmodulin-binding transcription activator 2 (CAMTA2) from Homo sapiens (Human).